We begin with the raw amino-acid sequence, 406 residues long: Putative phosphate permease TK2061 (406 aa).

Helical transmembrane passes span 2–22 (AVMD…AWAI), 45–65 (AVLI…KSVT), 82–102 (TVLI…LVIA), 115–135 (IIGG…VNWG), 139–159 (QVVL…FLVF), 182–202 (FWIG…VLHG), 208–228 (GVLF…FLTL), 288–308 (VPVP…GVAT), 324–346 (LTNT…ASWL), and 385–405 (FVTV…LMIV).

Belongs to the inorganic phosphate transporter (PiT) (TC 2.A.20) family.

Its subcellular location is the cell membrane. Potential transporter for phosphate. The chain is Putative phosphate permease TK2061 from Thermococcus kodakarensis (strain ATCC BAA-918 / JCM 12380 / KOD1) (Pyrococcus kodakaraensis (strain KOD1)).